Here is a 1113-residue protein sequence, read N- to C-terminus: Receptor-type guanylate cyclase gcy-18 (1113 aa).

Residues 1-18 form the signal peptide; the sequence is MLKTLLFILIFFNIPIIA. Topologically, residues 19–499 are extracellular; it reads IEEIPDIKEN…RGQRCSYLLE (481 aa). 3 N-linked (GlcNAc...) asparagine glycosylation sites follow: N72, N369, and N456. Residues 500–520 traverse the membrane as a helical segment; it reads ISVGSLIILLILISVVFFFLF. Residues 521–1113 are Cytoplasmic-facing; it reads RYCENKQLEK…TNYIQNVEGV (593 aa). The 306-residue stretch at 543–848 folds into the Protein kinase domain; sequence IDEEQVKSMM…RVRLNTEMVL (306 aa). Positions 853 to 884 form a coiled coil; it reads SLVDQMMKMMEQYANNLEKLVAERTGMLEEAN. The region spanning 918-1048 is the Guanylate cyclase domain; the sequence is TILFSDIVGF…DTVNVSSRME (131 aa). Residues D923, I924, and D967 each coordinate Mg(2+).

Belongs to the adenylyl cyclase class-4/guanylyl cyclase family. In terms of tissue distribution, expressed specifically in AFD sensory neurons.

The protein localises to the cell membrane. It is found in the cell projection. The protein resides in the cilium. It carries out the reaction GTP = 3',5'-cyclic GMP + diphosphate. Functionally, guanylate cyclase involved in the production of the second messenger cGMP. Regulates thermotaxis responses in AFD sensory neurons. May regulate AFD neuronal activity such as calcium responses to temperature gradients. This Caenorhabditis elegans protein is Receptor-type guanylate cyclase gcy-18.